A 345-amino-acid chain; its full sequence is Ferrochelatase (345 aa).

Fe cation contacts are provided by His-215 and Glu-296.

Belongs to the ferrochelatase family.

It localises to the cytoplasm. It catalyses the reaction heme b + 2 H(+) = protoporphyrin IX + Fe(2+). It functions in the pathway porphyrin-containing compound metabolism; protoheme biosynthesis; protoheme from protoporphyrin-IX: step 1/1. In terms of biological role, catalyzes the ferrous insertion into protoporphyrin IX. This Nitrobacter hamburgensis (strain DSM 10229 / NCIMB 13809 / X14) protein is Ferrochelatase.